A 122-amino-acid chain; its full sequence is Large ribosomal subunit protein uL18 (122 aa).

Belongs to the universal ribosomal protein uL18 family. Part of the 50S ribosomal subunit; part of the 5S rRNA/L5/L18/L25 subcomplex. Contacts the 5S and 23S rRNAs.

This is one of the proteins that bind and probably mediate the attachment of the 5S RNA into the large ribosomal subunit, where it forms part of the central protuberance. This Desulforamulus reducens (strain ATCC BAA-1160 / DSM 100696 / MI-1) (Desulfotomaculum reducens) protein is Large ribosomal subunit protein uL18.